The primary structure comprises 312 residues: Non-structural protein 12A (312 aa).

Residues 1–23 (MFKSGSGSLKRSGSISSVKSFSG) are compositionally biased toward low complexity. Disordered stretches follow at residues 1 to 37 (MFKS…RGSV), 62 to 97 (FVPE…YNQN), and 112 to 159 (SSKG…SHGT). The segment covering 63–73 (VPEKTKSEGNL) has biased composition (basic and acidic residues). Residues 74–97 (KNKSSVITGNFGSSGPTNAHYNQN) are compositionally biased toward polar residues. Basic and acidic residues predominate over residues 122–134 (DARHTATDSRLSQ). Residues 135–154 (EVKQPFSEENASGNDLNTGR) are compositionally biased toward polar residues.

This sequence belongs to the phytoreovirus non-structural protein Pns12A family.

It localises to the host cytoplasm. Its function is as follows. Constituent of viral factories. This chain is Non-structural protein 12A, found in Rice dwarf virus (isolate O) (RDV).